Here is a 476-residue protein sequence, read N- to C-terminus: FAD-dependent monooxygenase dpasE (476 aa).

The N-terminal stretch at 1 to 21 (MSQPAFKIIIVGCSVTGLTLA) is a signal peptide. The FAD site is built by Glu-35, Ala-49, and Arg-109. Asn-190 and Asn-219 each carry an N-linked (GlcNAc...) asparagine glycan. FAD-binding residues include Asp-308 and Ala-321. A helical transmembrane segment spans residues 441 to 461 (GAGFWITAFLSLSLLAVAATM).

Belongs to the paxM FAD-dependent monooxygenase family. The cofactor is FAD.

It is found in the membrane. It functions in the pathway secondary metabolite biosynthesis; terpenoid biosynthesis. FAD-dependent monooxygenase; part of the gene cluster that mediates the biosynthesis of the diterpenoid pyrones subglutinols A and B. The first step of the pathway is the synthesis of the alpha-pyrone moiety by the polyketide synthase dpasA via condensation of one acetyl-CoA starter unit with 3 malonyl-CoA units and 2 methylations. The alpha-pyrone is then combined with geranylgeranyl pyrophosphate (GGPP) formed by the GGPP synthase dpasD through the action of the prenyltransferase dpasC to yield a linear alpha-pyrone diterpenoid. Subsequent steps in the diterpenoid pyrone biosynthetic pathway involve the decalin core formation, which is initiated by the epoxidation of the C10-C11 olefin by the FAD-dependent oxidoreductase dpasE, and is followed by a cyclization cascade catalyzed by the terpene cyclase dpasB. The FAD-linked oxidoreductase dpasF is then involved in tetrahydrofuran (THF) ring formation at the C5 unit to complete the formation of subglutinols A and B. DpasF possesses also an additional catalytic ability of multi-step oxidations to generate a new DDP analog with an enone system at the C5 named FDDP A. In Apiospora sacchari (Arthrinium sacchari), this protein is FAD-dependent monooxygenase dpasE.